We begin with the raw amino-acid sequence, 293 residues long: Small ribosomal subunit biogenesis GTPase RsgA (293 aa).

The 161-residue stretch at 63-223 (QNELVRPPIA…VADTPGFSAL (161 aa)) folds into the CP-type G domain. GTP-binding positions include 112-115 (SKID) and 166-174 (GQSGVGKSS). Zn(2+) contacts are provided by cysteine 247, cysteine 252, histidine 254, and cysteine 260.

It belongs to the TRAFAC class YlqF/YawG GTPase family. RsgA subfamily. Monomer. Associates with 30S ribosomal subunit, binds 16S rRNA. It depends on Zn(2+) as a cofactor.

The protein resides in the cytoplasm. One of several proteins that assist in the late maturation steps of the functional core of the 30S ribosomal subunit. Helps release RbfA from mature subunits. May play a role in the assembly of ribosomal proteins into the subunit. Circularly permuted GTPase that catalyzes slow GTP hydrolysis, GTPase activity is stimulated by the 30S ribosomal subunit. This chain is Small ribosomal subunit biogenesis GTPase RsgA, found in Geobacillus kaustophilus (strain HTA426).